The sequence spans 298 residues: MGDQALSFLKDFLAGGIAAAVSKTAVAPIERVKLLLQVQHASKQISAEKQYKGIIDCVVRIPKEQGFLSFWRGNLANVIRYFPTQALNFAFKDKYKQIFLGGVDRHKQFWRYFAGNLASGGAAGATSLCFVYPLDFARTRLAADVGKGSSQREFNGLGDCLTKIFKSDGLKGLYQGFSVSVQGIIIYRAAYFGVYDTAKGMLPDPKNVHIIVSWMIAQSVTAVAGLVSYPFDTVRRRMMMQSGRKGADIMYTGTVDCWRKIAKDEGRKAFFKGAWSNVLRGMGGAFVLVLYDEIKKYV.

Over 1 to 7 (MGDQALS) the chain is Mitochondrial intermembrane. N-acetylglycine is present on Gly-2. One copy of the Solcar 1 repeat lies at 6–98 (LSFLKDFLAG…FAFKDKYKQI (93 aa)). The residue at position 7 (Ser-7) is a Phosphoserine. Residues 8 to 37 (FLKDFLAGGIAAAVSKTAVAPIERVKLLLQ) traverse the membrane as a helical segment. Residues 38 to 74 (VQHASKQISAEKQYKGIIDCVVRIPKEQGFLSFWRGN) are Mitochondrial matrix-facing. At Lys-52 the chain carries N6,N6,N6-trimethyllysine. Residues 75-99 (LANVIRYFPTQALNFAFKDKYKQIF) traverse the membrane as a helical segment. The ADP site is built by Arg-80 and Lys-92. Residues 100–109 (LGGVDRHKQF) are Mitochondrial intermembrane-facing. The helical transmembrane segment at 110 to 130 (WRYFAGNLASGGAAGATSLCF) threads the bilayer. 2 Solcar repeats span residues 111-201 (RYFA…AKGM) and 212-297 (VSWM…IKKY). The Mitochondrial matrix segment spans residues 131 to 178 (VYPLDFARTRLAADVGKGSSQREFNGLGDCLTKIFKSDGLKGLYQGFS). Lys-147 bears the N6-succinyllysine mark. Phosphoserine occurs at positions 149 and 150. Position 160 is an S-nitrosocysteine (Cys-160). A helical transmembrane segment spans residues 179-199 (VSVQGIIIYRAAYFGVYDTAK). The Mitochondrial intermembrane segment spans residues 200-210 (GMLPDPKNVHI). A helical transmembrane segment spans residues 211 to 231 (IVSWMIAQSVTAVAGLVSYPF). Residues 232-273 (DTVRRRMMMQSGRKGADIMYTGTVDCWRKIAKDEGRKAFFKG) lie on the Mitochondrial matrix side of the membrane. Position 235 (Arg-235) interacts with ADP. The important for transport activity stretch occupies residues 235–240 (RRRMMM). The Nucleotide carrier signature motif motif lies at 235-240 (RRRMMM). Lys-245 and Lys-272 each carry N6-succinyllysine. The helical transmembrane segment at 274–291 (AWSNVLRGMGGAFVLVLY) threads the bilayer. Topologically, residues 292–298 (DEIKKYV) are mitochondrial intermembrane.

Belongs to the mitochondrial carrier (TC 2.A.29) family. Monomer. Found in a complex with ARL2, ARL2BP and SLC25A4/ANT1. Interacts with ARL2BP. Interacts with TIMM44; leading to inhibit the presequence translocase TIMM23, thereby promoting stabilization of PINK1. In terms of processing, under cell death induction, transglutaminated by TGM2. Transglutamination leads to formation of covalent cross-links between a glutamine and the epsilon-amino group of a lysine residue, forming polymers.

It is found in the mitochondrion inner membrane. Its subcellular location is the membrane. It carries out the reaction ADP(in) + ATP(out) = ADP(out) + ATP(in). The enzyme catalyses H(+)(in) = H(+)(out). With respect to regulation, the matrix-open state (m-state) is inhibited by the membrane-permeable bongkrekic acid (BKA). The cytoplasmic-open state (c-state) is inhibited by the membrane-impermeable toxic inhibitor carboxyatractyloside (CATR). Proton transporter activity is inhibited by ADP:ATP antiporter activity. In terms of biological role, ADP:ATP antiporter that mediates import of ADP into the mitochondrial matrix for ATP synthesis, and export of ATP out to fuel the cell. Cycles between the cytoplasmic-open state (c-state) and the matrix-open state (m-state): operates by the alternating access mechanism with a single substrate-binding site intermittently exposed to either the cytosolic (c-state) or matrix (m-state) side of the inner mitochondrial membrane. In addition to its ADP:ATP antiporter activity, also involved in mitochondrial uncoupling and mitochondrial permeability transition pore (mPTP) activity. Plays a role in mitochondrial uncoupling by acting as a proton transporter: proton transport uncouples the proton flows via the electron transport chain and ATP synthase to reduce the efficiency of ATP production and cause mitochondrial thermogenesis. Proton transporter activity is inhibited by ADP:ATP antiporter activity, suggesting that SLC25A4/ANT1 acts as a master regulator of mitochondrial energy output by maintaining a delicate balance between ATP production (ADP:ATP antiporter activity) and thermogenesis (proton transporter activity). Proton transporter activity requires free fatty acids as cofactor, but does not transport it. Also plays a key role in mPTP opening, a non-specific pore that enables free passage of the mitochondrial membranes to solutes of up to 1.5 kDa, and which contributes to cell death. It is however unclear if SLC25A4/ANT1 constitutes a pore-forming component of mPTP or regulates it. Acts as a regulator of mitophagy independently of ADP:ATP antiporter activity: promotes mitophagy via interaction with TIMM44, leading to inhibit the presequence translocase TIMM23, thereby promoting stabilization of PINK1. The sequence is that of ADP/ATP translocase 1 from Rattus norvegicus (Rat).